Here is a 500-residue protein sequence, read N- to C-terminus: Cytochrome P450 11B3, mitochondrial (500 aa).

The transit peptide at 1–24 directs the protein to the mitochondrion; it reads MALRVTADVWLARPWQCLHRTRAL. Cys447 is a binding site for heme.

The protein belongs to the cytochrome P450 family. Heme is required as a cofactor. In terms of tissue distribution, expressed in the adrenal cortex and in different brain tissues, including hippocampus, hypothalamus, cerebellum, cerebral cortex, and midbrain.

The protein resides in the mitochondrion membrane. The catalysed reaction is a steroid + 2 reduced [adrenodoxin] + O2 + 2 H(+) = an 11beta-hydroxysteroid + 2 oxidized [adrenodoxin] + H2O. It catalyses the reaction 21-hydroxyprogesterone + 2 reduced [adrenodoxin] + O2 + 2 H(+) = corticosterone + 2 oxidized [adrenodoxin] + H2O. The enzyme catalyses 21-hydroxyprogesterone + 2 reduced [adrenodoxin] + O2 + 2 H(+) = 18-hydroxy-11-deoxycorticosterone + 2 oxidized [adrenodoxin] + H2O. It carries out the reaction 21-hydroxyprogesterone + 2 reduced [adrenodoxin] + O2 + 2 H(+) = 19-hydroxy-11-deoxycorticosterone + 2 oxidized [adrenodoxin] + H2O. Its function is as follows. A cytochrome P450 monooxygenase involved in the biosynthesis of adrenal corticoids. Catalyzes the hydroxylation of steroids at 11beta, 18- or 19-positions, with preferred regioselectivity at 11beta and 18. Converts 11-deoxycorticosterone into corticosterone, 18-hydroxy-11-deoxycorticosterone, and/or 19-hydroxy-11-deoxycorticosterone, but not to 18-hydroxycorticosterone or aldosterone. Mechanistically, uses molecular oxygen inserting one oxygen atom into a substrate for hydroxylation and reducing the second into a water molecule. Two electrons are provided by NADPH via a two-protein mitochondrial transfer system comprising flavoprotein FDXR (adrenodoxin/ferredoxin reductase) and nonheme iron-sulfur protein FDX1 or FDX2 (adrenodoxin/ferredoxin). This chain is Cytochrome P450 11B3, mitochondrial (Cyp11b3), found in Rattus norvegicus (Rat).